The sequence spans 130 residues: Methylglyoxal synthase (130 aa).

The 130-residue stretch at 1 to 130 folds into the MGS-like domain; sequence MSTPRIALIA…DLARRLPVKA (130 aa). Substrate contacts are provided by residues H11, K15, 37 to 40, and 57 to 58; these read TGTT and SG. The active-site Proton donor/acceptor is the D63. H90 serves as a coordination point for substrate.

It belongs to the methylglyoxal synthase family.

The enzyme catalyses dihydroxyacetone phosphate = methylglyoxal + phosphate. In terms of biological role, catalyzes the formation of methylglyoxal from dihydroxyacetone phosphate. This Burkholderia thailandensis (strain ATCC 700388 / DSM 13276 / CCUG 48851 / CIP 106301 / E264) protein is Methylglyoxal synthase.